Consider the following 721-residue polypeptide: Glucans biosynthesis glucosyltransferase H (721 aa).

6 helical membrane passes run 53–75 (VLIMVATAVLSAAGIYEMYQVLQ), 85–107 (VVLVLFAALFAWVALSFVSALAG), 404–426 (GIGAYLTAPMWLAFLIAGILISL), 456–478 (WVFAGTMGLLILPKLLALFLVLI), 490–512 (LRTFGGVLLETMISALTAPVMMV), and 567–589 (WPLLLWMTPVIVGLLLAIPVALL).

It belongs to the glycosyltransferase 2 family. OpgH subfamily.

The protein resides in the cell inner membrane. Its pathway is glycan metabolism; osmoregulated periplasmic glucan (OPG) biosynthesis. In terms of biological role, involved in the biosynthesis of osmoregulated periplasmic glucans (OPGs). This is Glucans biosynthesis glucosyltransferase H from Rhodopseudomonas palustris (strain ATCC BAA-98 / CGA009).